Reading from the N-terminus, the 783-residue chain is Protein DWD HYPERSENSITIVE TO UV-B 1 (783 aa).

WD repeat units lie at residues 145–198 (GEFT…LKLP) and 212–256 (SDSS…DPSL). The Nuclear localization signal motif lies at 382-389 (RKKESVVR). WD repeat units follow at residues 439–480 (DNSR…IFRY), 485–525 (GSQS…STVT), 538–577 (DEFD…RLQV), 581–621 (MHQE…SRPC), 625–664 (SSTK…LHLN), and 666–710 (EIVP…RRLR).

As to quaternary structure, interacts directly with DDB1A. Binds to COP1 and RUP1.

Its subcellular location is the nucleus. Functionally, may act as a substrate receptor of a CUL4-RING E3 ubiquitin-protein ligase (CRL4) complex involved in the negative regulation of cellular responses to ultraviolet-B (UV-B) illumination, likely in coordination with RUP1. Interacts with COP1 and probably prevents the formation of active UVR8-COP1 complex, thus avoiding UVR8-COP1-mediated positive regulation of UV-B responses. The sequence is that of Protein DWD HYPERSENSITIVE TO UV-B 1 from Arabidopsis thaliana (Mouse-ear cress).